Reading from the N-terminus, the 1171-residue chain is ATP-dependent helicase/deoxyribonuclease subunit B (1171 aa).

Residues 1–287 enclose the UvrD-like helicase ATP-binding domain; the sequence is MSLRFVIGRA…IPLMEQPRFH (287 aa). 8 to 15 serves as a coordination point for ATP; that stretch reads GRAGSGKS. Residues 281-587 form the UvrD-like helicase C-terminal domain; that stretch reads MEQPRFHSPA…QFANIPPSLD (307 aa). [4Fe-4S] cluster contacts are provided by Cys805, Cys1129, Cys1132, and Cys1138.

Belongs to the helicase family. AddB/RexB type 1 subfamily. As to quaternary structure, heterodimer of AddA and AddB. Requires Mg(2+) as cofactor. [4Fe-4S] cluster is required as a cofactor.

In terms of biological role, the heterodimer acts as both an ATP-dependent DNA helicase and an ATP-dependent, dual-direction single-stranded exonuclease. Recognizes the chi site generating a DNA molecule suitable for the initiation of homologous recombination. The AddB subunit has 5' -&gt; 3' nuclease activity but not helicase activity. This Bacillus cereus (strain G9842) protein is ATP-dependent helicase/deoxyribonuclease subunit B.